We begin with the raw amino-acid sequence, 309 residues long: Caspase-7 (309 aa).

A propeptide spans 1–24 (N-terminally processed); that stretch reads MSGDQHADRSSGEKSNGDQDDTVD. Residues 1-31 show a composition bias toward basic and acidic residues; sequence MSGDQHADRSSGEKSNGDQDDTVDAKPDRSS. The segment at 1–53 is disordered; it reads MSGDQHADRSSGEKSNGDQDDTVDAKPDRSSRLSLFAKKKKNGEEEQPKSSLS. The exosite stretch occupies residues 39 to 42; the sequence is KKKN. The interval 81-92 is loop L1; sequence KNFEDKTGMGTR. Residues His-149 and Cys-191 contribute to the active site. Residues 192–201 form a loop L2 region; it reads RGSEFDEGIQ. The propeptide occupies 204–214; it reads SGPANDTLETD. Residues 234-246 are loop L3; it reads VPGYYSWRNPGRG. The tract at residues 282–296 is loop L4; sequence ESQSDDPRFSEKKQI.

Belongs to the peptidase C14A family. As to quaternary structure, heterotetramer that consists of two anti-parallel arranged heterodimers, each one formed by a 20 kDa (p20) and a 11 kDa (p11) subunit. Post-translationally, cleavage by different proteases, such as granzyme B (GZMB), caspase-1 (CASP1), caspase-8 (CASP8) or caspase-9 (CASP9) generate the two active subunits. Its involvement in different programmed cell death processes is probably specified by the protease that activates CASP7. Cleaved and activated by initiator caspases (CASP8 and/or CASP9), leading to execution phase of apoptosis. Cleavage and maturation by GZMB regulates granzyme-mediated programmed cell death. Cleaved and activated by CASP1 in response to bacterial infection.

Its subcellular location is the cytoplasm. It localises to the cytosol. The protein resides in the nucleus. The protein localises to the secreted. It is found in the extracellular space. The enzyme catalyses Strict requirement for an Asp residue at position P1 and has a preferred cleavage sequence of Asp-Glu-Val-Asp-|-.. Its activity is regulated as follows. During activation, the N-terminal disordered prodomain is removed by cleavage. Concomitantly, double cleavage gives rise to a large Caspase-7 subunit p20 and a small Caspase-7 subunit p11. The two large and two small subunits then assemble to form the active CASP7 complex. Can be cleaved and activated by different caspases, depending on the context. Cleaved and activated by initiator caspases (CASP8 and/or CASP9), leading to execution phase of apoptosis. Cleavage and maturation by GZMB regulates granzyme-mediated programmed cell death. Cleavage and maturation by CASP1 regulates pyroptosis. Inhibited by BIRC6; following inhibition of BIRC6-caspase binding by DIABLO/SMAC, BIRC6 is subjected to caspase cleavage, leading to an increase in active caspases. Its function is as follows. Thiol protease involved in different programmed cell death processes, such as apoptosis, pyroptosis or granzyme-mediated programmed cell death, by proteolytically cleaving target proteins. Has a marked preference for Asp-Glu-Val-Asp (DEVD) consensus sequences, with some plasticity for alternate non-canonical sequences. Its involvement in the different programmed cell death processes is probably determined by upstream proteases that activate CASP7. Acts as an effector caspase involved in the execution phase of apoptosis: following cleavage and activation by initiator caspases (CASP8 and/or CASP9), mediates execution of apoptosis by catalyzing cleavage of proteins. Compared to CASP3, acts as a minor executioner caspase and cleaves a limited set of target proteins. Acts as a key regulator of the inflammatory response in response to bacterial infection by catalyzing cleavage and activation of the sphingomyelin phosphodiesterase SMPD1 in the extracellular milieu, thereby promoting membrane repair. Cleaves BIRC6 following inhibition of BIRC6-caspase binding by DIABLO/SMAC. In Gallus gallus (Chicken), this protein is Caspase-7.